The sequence spans 933 residues: Clumping factor A (933 aa).

A signal peptide spans 1–39 (MNMKKKEKHAIRKKSIGVASVLVGTLIGFGLLSSKEADA). The YSIRK-G/S signaling motif motif lies at 9–20 (HAIRKKSIGVAS). Disordered regions lie at residues 34 to 200 (SKEA…SNKD) and 529 to 904 (FNNG…SEDE). The segment at 40 to 542 (SENSVTQSDS…SGSGDGIDKP (503 aa)) is ligand binding A region. Residues 47-65 (SDSASNESKSNDSSSVSAA) are compositionally biased toward low complexity. The segment covering 71-105 (TNVSDTKTSSNTNNGETSVAQNPAQQETTQSSSTN) has biased composition (polar residues). Composition is skewed to low complexity over residues 106–132 (ATTE…ATTQ) and 143–162 (NQTS…SVNS). A compositionally biased stretch (polar residues) spans 163–200 (PQNSTNAENVSTTQDTSTEATPSNNESAPQSTDASNKD). The span at 547–565 (QPDEPGEIEPIPEDSDSDP) shows a compositional bias: acidic residues. Positions 566-598 (GSDSGSDSNSDSGSDSGSDSTSDSGSDSASDSD) are enriched in low complexity. Over residues 599–861 (SASDSDSASD…DSDSESDSNS (263 aa)) the composition is skewed to acidic residues. Low complexity predominate over residues 862–880 (DSESGSNNNVVPPNSPKNG). The segment covering 887–896 (NEAKDSKEPL) has biased composition (basic and acidic residues). Residues 896-900 (LPDTG) carry the LPXTG sorting signal motif. Position 899 is a pentaglycyl murein peptidoglycan amidated threonine (T899). A propeptide spans 900 to 933 (GSEDEANTSLIWGLLASIGSLLLFRRKKENKDKK) (removed by sortase).

Belongs to the serine-aspartate repeat-containing protein (SDr) family.

Its subcellular location is the secreted. It is found in the cell wall. Its function is as follows. Cell surface-associated protein implicated in virulence. Promotes bacterial attachment exclusively to the gamma-chain of human fibrinogen. Induces formation of bacterial clumps. The polypeptide is Clumping factor A (clfA) (Staphylococcus aureus (strain COL)).